A 262-amino-acid polypeptide reads, in one-letter code: Dihydroorotate dehydrogenase B (NAD(+)), electron transfer subunit (262 aa).

The FAD-binding FR-type domain maps to 3-104; the sequence is QLQEMMTVVS…MGPLGNGFPV (102 aa). Residues 53 to 56, 70 to 72, and 79 to 80 each bind FAD; these read RPIS, LYR, and GT. [2Fe-2S] cluster is bound by residues cysteine 226, cysteine 231, cysteine 234, and cysteine 249.

The protein belongs to the PyrK family. Heterotetramer of 2 PyrK and 2 PyrD type B subunits. [2Fe-2S] cluster serves as cofactor. Requires FAD as cofactor.

It functions in the pathway pyrimidine metabolism; UMP biosynthesis via de novo pathway; orotate from (S)-dihydroorotate (NAD(+) route): step 1/1. Functionally, responsible for channeling the electrons from the oxidation of dihydroorotate from the FMN redox center in the PyrD type B subunit to the ultimate electron acceptor NAD(+). In Lactococcus lactis subsp. cremoris (strain SK11), this protein is Dihydroorotate dehydrogenase B (NAD(+)), electron transfer subunit.